The sequence spans 232 residues: Zinc import ATP-binding protein ZnuC (232 aa).

The region spanning 5–220 (VNLKNIFVFY…PSFIEMFGCY (216 aa)) is the ABC transporter domain. 37-44 (GPNGSGKS) contributes to the ATP binding site.

The protein belongs to the ABC transporter superfamily. Zinc importer (TC 3.A.1.15.5) family. As to quaternary structure, the complex is composed of two ATP-binding proteins (ZnuC), two transmembrane proteins (ZnuB) and a solute-binding protein (ZnuA).

The protein localises to the cell membrane. It catalyses the reaction Zn(2+)(out) + ATP(in) + H2O(in) = Zn(2+)(in) + ADP(in) + phosphate(in) + H(+)(in). In terms of biological role, part of the ABC transporter complex ZnuABC involved in zinc import. Responsible for energy coupling to the transport system. This Wigglesworthia glossinidia brevipalpis protein is Zinc import ATP-binding protein ZnuC.